A 542-amino-acid chain; its full sequence is MSKEIKFSSDARTAMMRGIDILADTVKTTLGPKGRNVVLEKSYGSPLITNDGVTIAKEIELEDHFENMGAKLVSEVASKTNDIAGDGTTTATVLTQAIVREGLKNVTAGANPVGIRRGIELAAETAVASIKEMAIPVHDKSAIAQVATVSSRSEKVGEYISDAMERVGSDGVITIEESKGMQTELDVVEGMQFDRGYLSQYMVSNTEKMVAELDNPYILITDKKISNIQEILPLLEQILKTNRPLLIVADDVDGEALPTLVLNKIKGVFNVVAVKAPGFGDRRKAQLEDLAILTGGTVITEELGLDLKDATLEALGQAAKATVDKDHTTIVEGAGSVGAISDRVAIIKAQIEKITSDFDREKLQERLAKLAGGVAVVKVGAATETELKAMKLLIEDALNATRAAVEEGIVSGGGTALVNAIAALDKLSEEGDIQTGINIVRRALEEPVRQIAANAGYEGSVIIDKLRSEKVGTGFNAATGQWVNMIEEGIVDPAKVTRSALQNAASVAGLILTTEAVVANKPEPAAPAMPPMDPSMGMGGMM.

ATP-binding positions include 29–32 (TLGP), 86–90 (DGTTT), Gly413, 476–478 (NAA), and Asp492.

The protein belongs to the chaperonin (HSP60) family. In terms of assembly, forms a cylinder of 14 subunits composed of two heptameric rings stacked back-to-back. Interacts with the co-chaperonin GroES.

The protein resides in the cytoplasm. It carries out the reaction ATP + H2O + a folded polypeptide = ADP + phosphate + an unfolded polypeptide.. Functionally, together with its co-chaperonin GroES, plays an essential role in assisting protein folding. The GroEL-GroES system forms a nano-cage that allows encapsulation of the non-native substrate proteins and provides a physical environment optimized to promote and accelerate protein folding. This Lactococcus lactis subsp. cremoris (strain MG1363) protein is Chaperonin GroEL.